Consider the following 240-residue polypeptide: CRISPR system aCascade subunit Cas5 1 (240 aa).

This sequence belongs to the CRISPR-associated protein Cas5 family. Subtype I-A/Apern subfamily. As to quaternary structure, part of the aCascade ribonucleoprotein complex, minimally composed of Csa2 and Cas5a, which binds crRNA. Other possible components of aCascade in strain P1 are Cas6b (SSO1437) and Csa5 (SSO1443), while SSO1399, Cas5b (SSO1400) and SSO1401 have sometimes been seen weakly associated. Csa2 is probably the major RNA-binding subunit. The Csa2-Cas5a-crRNA complex also binds target DNA homologous to crRNA, probably forming an R-loop. Purified aCascade forms a filament about 6 nm in width.

CRISPR (clustered regularly interspaced short palindromic repeat) is an adaptive immune system that provides protection against mobile genetic elements (viruses, transposable elements and conjugative plasmids). CRISPR clusters contain spacers, sequences complementary to antecedent mobile elements, and target invading nucleic acids. CRISPR clusters are transcribed and processed into CRISPR RNA (crRNA). The sequence is that of CRISPR system aCascade subunit Cas5 1 (cas5a) from Saccharolobus solfataricus (strain ATCC 35092 / DSM 1617 / JCM 11322 / P2) (Sulfolobus solfataricus).